Consider the following 207-residue polypeptide: ADP-ribose pyrophosphatase (207 aa).

Substrate contacts are provided by residues 37 to 38 (RE) and R64. The Nudix hydrolase domain maps to 41–172 (EHFGAVAIVA…EIVNSIAIAG (132 aa)). A76 serves as a coordination point for Mg(2+). The Nudix box motif lies at 77–99 (GLLDVAGEPPHLTAARELREEVG). L78 provides a ligand contact to substrate. Mg(2+)-binding residues include E93 and E97. Residues 114–116 (APG) and E120 each bind substrate. E142 serves as a coordination point for Mg(2+). The active-site Proton acceptor is the E142.

It belongs to the Nudix hydrolase family. Homodimer. Mg(2+) serves as cofactor. Requires Mn(2+) as cofactor.

The catalysed reaction is ADP-D-ribose + H2O = D-ribose 5-phosphate + AMP + 2 H(+). It catalyses the reaction 8-oxo-dGDP + H2O = 8-oxo-dGMP + phosphate + H(+). The enzyme catalyses 8-oxo-GDP + H2O = 8-oxo-GMP + phosphate + H(+). Its function is as follows. Catalyzes the hydrolysis of ADP-ribose (ADPR) to AMP and ribose-5-phosphate. Can also hydrolyze ADP-mannose and ADP-glucose, with lower efficiency. Has weaker activity with NAD, GDP-sugars and UDP-sugars. Also catalyzes the conversion of 8-oxo-dGDP to 8-oxo-dGMP, and 8-oxo-GDP to 8-oxo-GMP. Functions in concert with MutT1 to detoxify 8-oxo-dGTP to 8-oxo-dGMP and may play an important role in supporting cellular growth under oxidative stress. The catalytic efficiency is much higher for the hydrolysis of ADPR than 8-oxo-dGTP, suggesting a more relevant biological role in hydrolysis of ADPR. The polypeptide is ADP-ribose pyrophosphatase (Mycobacterium tuberculosis (strain ATCC 25618 / H37Rv)).